The chain runs to 494 residues: ATP synthase subunit alpha 1 (494 aa).

Belongs to the ATPase alpha/beta chains family. F-type ATPases have 2 components, CF(1) - the catalytic core - and CF(0) - the membrane proton channel. CF(1) has five subunits: alpha(3), beta(3), gamma(1), delta(1), epsilon(1). CF(0) has three main subunits: a(1), b(2) and c(9-12). The alpha and beta chains form an alternating ring which encloses part of the gamma chain. CF(1) is attached to CF(0) by a central stalk formed by the gamma and epsilon chains, while a peripheral stalk is formed by the delta and b chains.

Its subcellular location is the cell inner membrane. It carries out the reaction ATP + H2O + 4 H(+)(in) = ADP + phosphate + 5 H(+)(out). In terms of biological role, produces ATP from ADP in the presence of a proton gradient across the membrane. The alpha chain is a regulatory subunit. This Hahella chejuensis (strain KCTC 2396) protein is ATP synthase subunit alpha 1.